The primary structure comprises 327 residues: Serum response factor homolog (327 aa).

The disordered stretch occupies residues 12–43; the sequence is QKLQNASPALPEGTSSTPTPSSSTGLLPNGKK. The segment covering 25-35 has biased composition (low complexity); that stretch reads TSSTPTPSSST. The MADS-box domain occupies 45 to 105; it reads KGRVKIKMEY…GHVYTYATPK (61 aa). A disordered region spans residues 189–225; the sequence is TFGEDDYNNDESGDDSDSEEASSDIKEEYQGSPTMVK. Positions 191–210 are enriched in acidic residues; the sequence is GEDDYNNDESGDDSDSEEAS.

Expressed in muscle, varying with age, decreasing twofold during the first week of adulthood.

The protein resides in the nucleus. Its function is as follows. Transcription factor. Regulates myogenesis, in cooperation with transcription factors hlh-1 and hnd-1. Required for maintenance of muscle in adulthood. The sequence is that of Serum response factor homolog from Caenorhabditis elegans.